Consider the following 1361-residue polypeptide: DNA-directed RNA polymerase subunit beta' (1361 aa).

Zn(2+) is bound by residues Cys-69, Cys-71, Cys-84, and Cys-87. Mg(2+) is bound by residues Asp-460, Asp-462, and Asp-464. Zn(2+) contacts are provided by Cys-808, Cys-882, Cys-889, and Cys-892.

The protein belongs to the RNA polymerase beta' chain family. The RNAP catalytic core consists of 2 alpha, 1 beta, 1 beta' and 1 omega subunit. When a sigma factor is associated with the core the holoenzyme is formed, which can initiate transcription. Mg(2+) serves as cofactor. The cofactor is Zn(2+).

It catalyses the reaction RNA(n) + a ribonucleoside 5'-triphosphate = RNA(n+1) + diphosphate. In terms of biological role, DNA-dependent RNA polymerase catalyzes the transcription of DNA into RNA using the four ribonucleoside triphosphates as substrates. The chain is DNA-directed RNA polymerase subunit beta' from Rickettsia bellii (strain RML369-C).